The following is a 115-amino-acid chain: Phosphoribosyl-AMP cyclohydrolase (115 aa).

Position 80 (Asp80) interacts with Mg(2+). Zn(2+) is bound at residue Cys81. Mg(2+) contacts are provided by Asp82 and Asp84. The Zn(2+) site is built by Cys97 and Cys104.

The protein belongs to the PRA-CH family. In terms of assembly, homodimer. The cofactor is Mg(2+). Zn(2+) is required as a cofactor.

It localises to the cytoplasm. It catalyses the reaction 1-(5-phospho-beta-D-ribosyl)-5'-AMP + H2O = 1-(5-phospho-beta-D-ribosyl)-5-[(5-phospho-beta-D-ribosylamino)methylideneamino]imidazole-4-carboxamide. It participates in amino-acid biosynthesis; L-histidine biosynthesis; L-histidine from 5-phospho-alpha-D-ribose 1-diphosphate: step 3/9. In terms of biological role, catalyzes the hydrolysis of the adenine ring of phosphoribosyl-AMP. This chain is Phosphoribosyl-AMP cyclohydrolase, found in Mycolicibacterium gilvum (strain PYR-GCK) (Mycobacterium gilvum (strain PYR-GCK)).